The sequence spans 133 residues: ATP synthase epsilon chain, chloroplastic (133 aa).

Belongs to the ATPase epsilon chain family. F-type ATPases have 2 components, CF(1) - the catalytic core - and CF(0) - the membrane proton channel. CF(1) has five subunits: alpha(3), beta(3), gamma(1), delta(1), epsilon(1). CF(0) has three main subunits: a, b and c.

It is found in the plastid. Its subcellular location is the chloroplast thylakoid membrane. Its function is as follows. Produces ATP from ADP in the presence of a proton gradient across the membrane. In Lotus japonicus (Lotus corniculatus var. japonicus), this protein is ATP synthase epsilon chain, chloroplastic.